A 207-amino-acid polypeptide reads, in one-letter code: Large ribosomal subunit protein uL4 (207 aa).

The interval 49–78 is disordered; the sequence is HAVKNRSAVSGGGRKPWRQKGTGRARQGSI.

Belongs to the universal ribosomal protein uL4 family. As to quaternary structure, part of the 50S ribosomal subunit.

One of the primary rRNA binding proteins, this protein initially binds near the 5'-end of the 23S rRNA. It is important during the early stages of 50S assembly. It makes multiple contacts with different domains of the 23S rRNA in the assembled 50S subunit and ribosome. Its function is as follows. Forms part of the polypeptide exit tunnel. The chain is Large ribosomal subunit protein uL4 from Streptococcus sanguinis (strain SK36).